The sequence spans 106 residues: MTQLYETMYIIRPDLGEETVDQVINQYQSLLRDQGAEDVQTQHRGKRRLAYEIRKFREGIYVQMNYKAAGPLVANLQRAMRLSDEVIRYLTICQDEPDTDVEAATA.

It belongs to the bacterial ribosomal protein bS6 family.

Its function is as follows. Binds together with bS18 to 16S ribosomal RNA. The polypeptide is Small ribosomal subunit protein bS6 (Cyanothece sp. (strain PCC 7425 / ATCC 29141)).